A 545-amino-acid polypeptide reads, in one-letter code: Esterase-5C (545 aa).

Residues methionine 1–alanine 19 form the signal peptide. Cysteine 84 and cysteine 103 are disulfide-bonded. Asparagine 113 carries an N-linked (GlcNAc...) asparagine glycan. The active-site Acyl-ester intermediate is serine 207. A disulfide bond links cysteine 259 and cysteine 271. An N-linked (GlcNAc...) asparagine glycan is attached at asparagine 421. Histidine 467 functions as the Charge relay system in the catalytic mechanism. A glycan (N-linked (GlcNAc...) asparagine) is linked at asparagine 507. A disulfide bond links cysteine 515 and cysteine 536.

Belongs to the type-B carboxylesterase/lipase family.

The protein localises to the secreted. The enzyme catalyses a carboxylic ester + H2O = an alcohol + a carboxylate + H(+). The protein is Esterase-5C (Est-5C) of Drosophila persimilis (Fruit fly).